The following is a 577-amino-acid chain: Sulfite reductase [NADPH] hemoprotein beta-component 2 (577 aa).

The [4Fe-4S] cluster site is built by cysteine 441, cysteine 447, cysteine 486, and cysteine 490. Residue cysteine 490 participates in siroheme binding.

This sequence belongs to the nitrite and sulfite reductase 4Fe-4S domain family. In terms of assembly, alpha(8)-beta(8). The alpha component is a flavoprotein, the beta component is a hemoprotein. Siroheme is required as a cofactor. [4Fe-4S] cluster serves as cofactor.

The catalysed reaction is hydrogen sulfide + 3 NADP(+) + 3 H2O = sulfite + 3 NADPH + 4 H(+). It participates in sulfur metabolism; hydrogen sulfide biosynthesis; hydrogen sulfide from sulfite (NADPH route): step 1/1. In terms of biological role, component of the sulfite reductase complex that catalyzes the 6-electron reduction of sulfite to sulfide. This is one of several activities required for the biosynthesis of L-cysteine from sulfate. This chain is Sulfite reductase [NADPH] hemoprotein beta-component 2, found in Pectobacterium carotovorum subsp. carotovorum (strain PC1).